The following is a 182-amino-acid chain: ATP synthase subunit delta (182 aa).

It belongs to the ATPase delta chain family. In terms of assembly, F-type ATPases have 2 components, F(1) - the catalytic core - and F(0) - the membrane proton channel. F(1) has five subunits: alpha(3), beta(3), gamma(1), delta(1), epsilon(1). F(0) has three main subunits: a(1), b(2) and c(10-14). The alpha and beta chains form an alternating ring which encloses part of the gamma chain. F(1) is attached to F(0) by a central stalk formed by the gamma and epsilon chains, while a peripheral stalk is formed by the delta and b chains.

It is found in the cell inner membrane. Functionally, f(1)F(0) ATP synthase produces ATP from ADP in the presence of a proton or sodium gradient. F-type ATPases consist of two structural domains, F(1) containing the extramembraneous catalytic core and F(0) containing the membrane proton channel, linked together by a central stalk and a peripheral stalk. During catalysis, ATP synthesis in the catalytic domain of F(1) is coupled via a rotary mechanism of the central stalk subunits to proton translocation. In terms of biological role, this protein is part of the stalk that links CF(0) to CF(1). It either transmits conformational changes from CF(0) to CF(1) or is implicated in proton conduction. This is ATP synthase subunit delta from Hydrogenobaculum sp. (strain Y04AAS1).